We begin with the raw amino-acid sequence, 207 residues long: tRNA (pseudouridine(54)-N(1))-methyltransferase (207 aa).

Leu-137 provides a ligand contact to S-adenosyl-L-methionine.

This sequence belongs to the methyltransferase superfamily. TrmY family. In terms of assembly, homodimer.

It is found in the cytoplasm. It catalyses the reaction pseudouridine(54) in tRNA + S-adenosyl-L-methionine = N(1)-methylpseudouridine(54) in tRNA + S-adenosyl-L-homocysteine + H(+). Its function is as follows. Specifically catalyzes the N1-methylation of pseudouridine at position 54 (Psi54) in tRNAs. In Halorubrum lacusprofundi (strain ATCC 49239 / DSM 5036 / JCM 8891 / ACAM 34), this protein is tRNA (pseudouridine(54)-N(1))-methyltransferase.